A 955-amino-acid polypeptide reads, in one-letter code: MEVTCLLLLALIPFHCRGQGVYAPAQAQIVHAGQACVVKEDNISERVYTIREGDTLMLQCLVTGHPRPQVRWTKTAGSASDKFQETSVFNETLRIERIARTQGGRYYCKAENGVGVPAIKSIRVDVQYLDEPMLTVHQTVSDVRGNFYQEKTVFLRCTVNSNPPARFIWKRGSDTLSHSQDNGVDIYEPLYTQGETKVLKLKNLRPQDYASYTCQVSVRNVCGIPDKAITFRLTNTTAPPALKLSVNETLVVNPGENVTVQCLLTGGDPLPQLQWSHGPGPLPLGALAQGGTLSIPSVQARDSGYYNCTATNNVGNPAKKTVNLLVRSMKNATFQITPDVIKESENIQLGQDLKLSCHVDAVPQEKVTYQWFKNGKPARMSKRLLVTRNDPELPAVTSSLELIDLHFSDYGTYLCMASFPGAPVPDLSVEVNISSETVPPTISVPKGRAVVTVREGSPAELQCEVRGKPRPPVLWSRVDKEAALLPSGLPLEETPDGKLRLERVSRDMSGTYRCQTARYNGFNVRPREAQVQLNVQFPPEVEPSSQDVRQALGRPVLLRCSLLRGSPQRIASAVWRFKGQLLPPPPVVPAAAEAPDHAELRLDAVTRDSSGSYECSVSNDVGSAACLFQVSAKAYSPEFYFDTPNPTRSHKLSKNYSYVLQWTQREPDAVDPVLNYRLSIRQLNQHNAVVKAIPVRRVEKGQLLEYILTDLRVPHSYEVRLTPYTTFGAGDMASRIIHYTEPINSPNLSDNTCHFEDEKICGYTQDLTDNFDWTRQNALTQNPKRSPNTGPPTDISGTPEGYYMFIETSRPRELGDRARLVSPLYNASAKFYCVSFFYHMYGKHIGSLNLLVRSRNKGALDTHAWSLSGNKGNVWQQAHVPISPSGPFQIIFEGVRGPGYLGDIAIDDVTLKKGECPRKQTDPNKVVVMPGSGAPCQSSPQLWGPMAIFLLALQR.

An N-terminal signal peptide occupies residues 1-18 (MEVTCLLLLALIPFHCRG). 2 consecutive Ig-like domains span residues 24–123 (PAQA…KSIR) and 132–230 (PMLT…KAIT). Residues asparagine 42 and asparagine 90 are each glycosylated (N-linked (GlcNAc...) asparagine). Disulfide bonds link cysteine 60-cysteine 108 and cysteine 157-cysteine 214. Residues asparagine 235, asparagine 247, asparagine 257, asparagine 307, and asparagine 331 are each glycosylated (N-linked (GlcNAc...) asparagine). Positions 240–323 (PALKLSVNET…VGNPAKKTVN (84 aa)) constitute an Ig-like 3 domain. A disulfide bridge links cysteine 262 with cysteine 308. 3 consecutive Ig-like domains span residues 338-432 (PDVI…VEVN), 440-532 (PTIS…AQVQ), and 539-631 (PEVE…FQVS). A disulfide bridge connects residues cysteine 357 and cysteine 415. A glycan (N-linked (GlcNAc...) asparagine) is linked at asparagine 432. 2 disulfides stabilise this stretch: cysteine 463/cysteine 514 and cysteine 560/cysteine 615. Positions 643 to 743 (TPNPTRSHKL…SRIIHYTEPI (101 aa)) constitute a Fibronectin type-III domain. 2 N-linked (GlcNAc...) asparagine glycosylation sites follow: asparagine 655 and asparagine 747. The MAM domain occupies 751–918 (NTCHFEDEKI…VTLKKGECPR (168 aa)). The segment covering 779–788 (LTQNPKRSPN) has biased composition (polar residues). Residues 779–798 (LTQNPKRSPNTGPPTDISGT) are disordered. Asparagine 826 carries an N-linked (GlcNAc...) asparagine glycan. Residue serine 932 is the site of GPI-anchor amidated serine attachment. A propeptide spans 933–955 (GAPCQSSPQLWGPMAIFLLALQR) (removed in mature form).

Interacts heterophilically through its MAM domain with proteins in axon-rich regions and through its Ig-like domains with proteins in differentiating muscle. Interacts (through the Ig-like domains) with NLGN2. As to expression, has been found in brain, heart, skeletal muscle and kidney. Found to be overexpressed in tumor tissues.

It is found in the cell membrane. In terms of biological role, required for radial migration of cortical neurons in the superficial layer of the neocortex. Plays a role in the formation or maintenance of inhibitory synapses. May function by inhibiting the activity of NLGN2. This is MAM domain-containing glycosylphosphatidylinositol anchor protein 1 (MDGA1) from Homo sapiens (Human).